The primary structure comprises 649 residues: Putative calpain-like cysteine protease A (649 aa).

A propeptide spanning residues 1-3 (MLT) is cleaved from the precursor. Disordered regions lie at residues 1–22 (MLTT…SSPS) and 124–193 (PLSN…SMPA). Residues 15 to 123 (TTTTSSPSSD…LHANGEAKWY (109 aa)) enclose the C2 domain. Positions 140–149 (ITNSNNKDNN) are enriched in low complexity. Basic and acidic residues predominate over residues 159–172 (AQEKGDEDQHHSAD). Domain III stretches follow at residues 458–489 (EGTY…NATF) and 498–633 (EVEQ…ISLD).

This sequence belongs to the peptidase C2 family. In terms of assembly, monomer. In terms of processing, undergoes autolytic cleavage between Pro-192 and Ala-193.

Its subcellular location is the cytoplasm. It is found in the cytosol. Functionally, has a weak caseinolytic activity. In Dictyostelium discoideum (Social amoeba), this protein is Putative calpain-like cysteine protease A (cplA).